Here is a 282-residue protein sequence, read N- to C-terminus: Pantothenate synthetase (282 aa).

ATP is bound at residue 30 to 37 (MGYLHEGH). H37 acts as the Proton donor in catalysis. Q61 is a binding site for (R)-pantoate. Position 61 (Q61) interacts with beta-alanine. 147-150 (GMKD) contacts ATP. Q153 is a (R)-pantoate binding site. ATP contacts are provided by residues V176 and 184 to 187 (KSSR).

It belongs to the pantothenate synthetase family. In terms of assembly, homodimer.

Its subcellular location is the cytoplasm. The enzyme catalyses (R)-pantoate + beta-alanine + ATP = (R)-pantothenate + AMP + diphosphate + H(+). Its pathway is cofactor biosynthesis; (R)-pantothenate biosynthesis; (R)-pantothenate from (R)-pantoate and beta-alanine: step 1/1. Functionally, catalyzes the condensation of pantoate with beta-alanine in an ATP-dependent reaction via a pantoyl-adenylate intermediate. This Bacillus cytotoxicus (strain DSM 22905 / CIP 110041 / 391-98 / NVH 391-98) protein is Pantothenate synthetase.